Here is a 360-residue protein sequence, read N- to C-terminus: UDP-N-acetylglucosamine--N-acetylmuramyl-(pentapeptide) pyrophosphoryl-undecaprenol N-acetylglucosamine transferase (360 aa).

UDP-N-acetyl-alpha-D-glucosamine contacts are provided by Ser-198 and Gln-289.

Belongs to the glycosyltransferase 28 family. MurG subfamily.

The protein resides in the cell membrane. It carries out the reaction Mur2Ac(oyl-L-Ala-gamma-D-Glu-L-Lys-D-Ala-D-Ala)-di-trans,octa-cis-undecaprenyl diphosphate + UDP-N-acetyl-alpha-D-glucosamine = beta-D-GlcNAc-(1-&gt;4)-Mur2Ac(oyl-L-Ala-gamma-D-Glu-L-Lys-D-Ala-D-Ala)-di-trans,octa-cis-undecaprenyl diphosphate + UDP + H(+). It participates in cell wall biogenesis; peptidoglycan biosynthesis. Cell wall formation. Catalyzes the transfer of a GlcNAc subunit on undecaprenyl-pyrophosphoryl-MurNAc-pentapeptide (lipid intermediate I) to form undecaprenyl-pyrophosphoryl-MurNAc-(pentapeptide)GlcNAc (lipid intermediate II). The polypeptide is UDP-N-acetylglucosamine--N-acetylmuramyl-(pentapeptide) pyrophosphoryl-undecaprenol N-acetylglucosamine transferase (Streptococcus pyogenes serotype M6 (strain ATCC BAA-946 / MGAS10394)).